The primary structure comprises 110 residues: Cytochrome bo(3) ubiquinol oxidase subunit 4 (110 aa).

Over 1–18 (MANAHDTHHEGNHGSVKS) the chain is Cytoplasmic. The chain crosses the membrane as a helical span at residues 19 to 39 (YMIGFILSIILTAIPFGLAMS). Over 40–46 (PSLPKNL) the chain is Periplasmic. Residues 47–67 (TVLIIVAMAVIQVVVHLVYFL) form a helical membrane-spanning segment. Over 68–78 (HMDRSKEQRNN) the chain is Cytoplasmic. A helical transmembrane segment spans residues 79 to 99 (VWTFLFTTLVIALLVGLSLWI). Topologically, residues 100–110 (MFSIHFEMLAK) are periplasmic.

Belongs to the cytochrome c oxidase bacterial subunit 4 family. Heterooctamer of two A chains, two B chains, two C chains and two D chains.

Its subcellular location is the cell inner membrane. Cytochrome bo(3) ubiquinol terminal oxidase is the component of the aerobic respiratory chain of E.coli that predominates when cells are grown at high aeration. Has proton pump activity across the membrane in addition to electron transfer, pumping 2 protons/electron. This Pseudomonas putida (Arthrobacter siderocapsulatus) protein is Cytochrome bo(3) ubiquinol oxidase subunit 4 (cyoD).